Reading from the N-terminus, the 629-residue chain is uncharacterized protein (629 aa).

4 disordered regions span residues 101-126 (SWKK…TPPT), 172-209 (PQKD…EEED), 315-339 (STPK…NSQR), and 448-468 (GENT…SEEP). Positions 200 to 209 (TEEEEEEEED) are enriched in acidic residues. Position 334 is a phosphoserine (Ser334). Positions 448-463 (GENTANNGYGPQTLNE) are enriched in polar residues.

This is an uncharacterized protein from Schizosaccharomyces pombe (strain 972 / ATCC 24843) (Fission yeast).